Reading from the N-terminus, the 226-residue chain is V-type proton ATPase subunit E 2 (226 aa).

The protein belongs to the V-ATPase E subunit family. V-ATPase is a heteromultimeric enzyme made up of two complexes: the ATP-hydrolytic V1 complex and the proton translocation V0 complex. The V1 complex consists of three catalytic AB heterodimers that form a heterohexamer, three peripheral stalks each consisting of EG heterodimers, one central rotor including subunits D and F, and the regulatory subunits C and H. The proton translocation complex V0 consists of the proton transport subunit a, a ring of proteolipid subunits c9c'', rotary subunit d, subunits e and f, and the accessory subunits ATP6AP1/Ac45 and ATP6AP2/PRR. In terms of tissue distribution, testis specific.

Subunit of the V1 complex of vacuolar(H+)-ATPase (V-ATPase), a multisubunit enzyme composed of a peripheral complex (V1) that hydrolyzes ATP and a membrane integral complex (V0) that translocates protons. V-ATPase is responsible for acidifying and maintaining the pH of intracellular compartments and in some cell types, is targeted to the plasma membrane, where it is responsible for acidifying the extracellular environment. The chain is V-type proton ATPase subunit E 2 (ATP6V1E2) from Homo sapiens (Human).